The chain runs to 270 residues: MDNKIVYVVSDSVGETADLVVRAAMGQFPFAPDIRRVPYVEDTGTLKEVISIAKSNQALICFTLVKPDMRQYLVTEAAKEGVEAYDIIGPLIDQIEEITGQVPRYEPGVVRRLDEEYFKKIEAIEFAVKYDDGRDARGILKADIVLIGISRTSKTPLSQYLAHNKRLKVANVPLVPEVDPPEELYQVAKEKCFGLKITPEKLNHIRKERLKSLGLSDGATYANINRIKEEIDHFENVVSKINCQVIDVSNKAIEETANIIVNAVQNQKMF.

ADP is bound at residue 148–155; the sequence is GISRTSKT.

This sequence belongs to the pyruvate, phosphate/water dikinase regulatory protein family. PDRP subfamily.

The catalysed reaction is N(tele)-phospho-L-histidyl/L-threonyl-[pyruvate, phosphate dikinase] + ADP = N(tele)-phospho-L-histidyl/O-phospho-L-threonyl-[pyruvate, phosphate dikinase] + AMP + H(+). The enzyme catalyses N(tele)-phospho-L-histidyl/O-phospho-L-threonyl-[pyruvate, phosphate dikinase] + phosphate + H(+) = N(tele)-phospho-L-histidyl/L-threonyl-[pyruvate, phosphate dikinase] + diphosphate. In terms of biological role, bifunctional serine/threonine kinase and phosphorylase involved in the regulation of the pyruvate, phosphate dikinase (PPDK) by catalyzing its phosphorylation/dephosphorylation. The protein is Putative pyruvate, phosphate dikinase regulatory protein of Bacillus cereus (strain AH187).